A 238-amino-acid chain; its full sequence is Purine nucleoside phosphorylase DeoD-type (238 aa).

Histidine 4 provides a ligand contact to a purine D-ribonucleoside. Phosphate is bound by residues glycine 20, arginine 24, arginine 43, and arginine 87–serine 90. A purine D-ribonucleoside-binding positions include glutamate 179–glutamate 181 and serine 203–aspartate 204. Aspartate 204 serves as the catalytic Proton donor.

It belongs to the PNP/UDP phosphorylase family. As to quaternary structure, homohexamer; trimer of homodimers.

It catalyses the reaction a purine D-ribonucleoside + phosphate = a purine nucleobase + alpha-D-ribose 1-phosphate. The enzyme catalyses a purine 2'-deoxy-D-ribonucleoside + phosphate = a purine nucleobase + 2-deoxy-alpha-D-ribose 1-phosphate. Catalyzes the reversible phosphorolytic breakdown of the N-glycosidic bond in the beta-(deoxy)ribonucleoside molecules, with the formation of the corresponding free purine bases and pentose-1-phosphate. The polypeptide is Purine nucleoside phosphorylase DeoD-type (Histophilus somni (strain 2336) (Haemophilus somnus)).